We begin with the raw amino-acid sequence, 429 residues long: MHTKSIELHNEALQHIVGGVNSPSRSYKAVGGGSPVAMEKASGAYFWDVDGNKYIDYLAAYGPIITGHAHPHITEAIKKAAENGVLYGTPTKHEVTFAKMLKEAIPAMDKVRFVNSGTEAVMTTIRVARAYTGRTKIIKFAGCYHGHSDLVLVAAGSGPSTLGTPDSAGVPKSIANEVITVPFNDIDSYKAALEKWGSEIAAVLVEPIVGNFGIVEPKEGFLEQVNELTHNAGALVIYDEVITAFRFMYGGAQDLLQVKPDLTALGKIIGGGLPIGAYGGKQEIMEQVAPLGPAYQAGTMAGNPASILSGIACLEVLKEKGVYEKLDHLGAMLEEGILKHAETHGITITVNRLKGALTVYFSDEKVENYEQAERSDGETFSTFFKLMLERGINLAPSKYEAWFITTAHTEQDIKDTLTAVEDAFKHLKN.

Lysine 267 carries the post-translational modification N6-(pyridoxal phosphate)lysine.

The protein belongs to the class-III pyridoxal-phosphate-dependent aminotransferase family. HemL subfamily. Homodimer. Requires pyridoxal 5'-phosphate as cofactor.

The protein resides in the cytoplasm. It catalyses the reaction (S)-4-amino-5-oxopentanoate = 5-aminolevulinate. The protein operates within porphyrin-containing compound metabolism; protoporphyrin-IX biosynthesis; 5-aminolevulinate from L-glutamyl-tRNA(Glu): step 2/2. This chain is Glutamate-1-semialdehyde 2,1-aminomutase 2 (gsaB), found in Bacillus subtilis (strain 168).